The primary structure comprises 1221 residues: DNA-directed RNA polymerase subunit beta' (1221 aa).

Zn(2+) is bound by residues cysteine 60, cysteine 62, cysteine 75, and cysteine 78. Residues aspartate 449, aspartate 451, and aspartate 453 each coordinate Mg(2+). Residues cysteine 820, cysteine 894, cysteine 901, and cysteine 904 each coordinate Zn(2+).

Belongs to the RNA polymerase beta' chain family. The RNAP catalytic core consists of 2 alpha, 1 beta, 1 beta' and 1 omega subunit. When a sigma factor is associated with the core the holoenzyme is formed, which can initiate transcription. Mg(2+) is required as a cofactor. It depends on Zn(2+) as a cofactor.

The enzyme catalyses RNA(n) + a ribonucleoside 5'-triphosphate = RNA(n+1) + diphosphate. Its function is as follows. DNA-dependent RNA polymerase catalyzes the transcription of DNA into RNA using the four ribonucleoside triphosphates as substrates. The polypeptide is DNA-directed RNA polymerase subunit beta' (Ligilactobacillus salivarius (strain UCC118) (Lactobacillus salivarius)).